Consider the following 157-residue polypeptide: Phosphopantetheine adenylyltransferase (157 aa).

Substrate is bound at residue serine 9. ATP is bound by residues 9-10 and histidine 17; that span reads SF. Substrate-binding residues include lysine 41, leucine 73, and lysine 87. Residues 88-90, glutamate 98, and 123-129 contribute to the ATP site; these read GLR and YSFLSSS.

This sequence belongs to the bacterial CoaD family. In terms of assembly, homohexamer. The cofactor is Mg(2+).

It localises to the cytoplasm. The enzyme catalyses (R)-4'-phosphopantetheine + ATP + H(+) = 3'-dephospho-CoA + diphosphate. Its pathway is cofactor biosynthesis; coenzyme A biosynthesis; CoA from (R)-pantothenate: step 4/5. Its function is as follows. Reversibly transfers an adenylyl group from ATP to 4'-phosphopantetheine, yielding dephospho-CoA (dPCoA) and pyrophosphate. This Alkaliphilus oremlandii (strain OhILAs) (Clostridium oremlandii (strain OhILAs)) protein is Phosphopantetheine adenylyltransferase.